Consider the following 250-residue polypeptide: tRNA (guanine-N(1)-)-methyltransferase (250 aa).

Residues Gly-113 and 134–139 (IGDYVL) contribute to the S-adenosyl-L-methionine site.

This sequence belongs to the RNA methyltransferase TrmD family. Homodimer.

The protein resides in the cytoplasm. It carries out the reaction guanosine(37) in tRNA + S-adenosyl-L-methionine = N(1)-methylguanosine(37) in tRNA + S-adenosyl-L-homocysteine + H(+). Functionally, specifically methylates guanosine-37 in various tRNAs. This is tRNA (guanine-N(1)-)-methyltransferase from Buchnera aphidicola subsp. Baizongia pistaciae (strain Bp).